The following is a 295-amino-acid chain: 3-methyl-2-oxobutanoate hydroxymethyltransferase (295 aa).

A disordered region spans residues 1–30 (MTSGRAMSPEETAPYGTGPARAESAPDAPA). Mg(2+) is bound by residues D76 and D115. 3-methyl-2-oxobutanoate-binding positions include 76–77 (DS), D115, and K145. Mg(2+) is bound at residue E147. The active-site Proton acceptor is the E213.

Belongs to the PanB family. As to quaternary structure, homodecamer; pentamer of dimers. Mg(2+) serves as cofactor.

The protein resides in the cytoplasm. It catalyses the reaction 3-methyl-2-oxobutanoate + (6R)-5,10-methylene-5,6,7,8-tetrahydrofolate + H2O = 2-dehydropantoate + (6S)-5,6,7,8-tetrahydrofolate. The protein operates within cofactor biosynthesis; (R)-pantothenate biosynthesis; (R)-pantoate from 3-methyl-2-oxobutanoate: step 1/2. Functionally, catalyzes the reversible reaction in which hydroxymethyl group from 5,10-methylenetetrahydrofolate is transferred onto alpha-ketoisovalerate to form ketopantoate. In Nocardioides sp. (strain ATCC BAA-499 / JS614), this protein is 3-methyl-2-oxobutanoate hydroxymethyltransferase.